The sequence spans 289 residues: Ribosomal RNA small subunit methyltransferase A (289 aa).

Positions 27, 29, 54, 76, 102, and 123 each coordinate S-adenosyl-L-methionine.

This sequence belongs to the class I-like SAM-binding methyltransferase superfamily. rRNA adenine N(6)-methyltransferase family. RsmA subfamily.

It localises to the cytoplasm. The catalysed reaction is adenosine(1518)/adenosine(1519) in 16S rRNA + 4 S-adenosyl-L-methionine = N(6)-dimethyladenosine(1518)/N(6)-dimethyladenosine(1519) in 16S rRNA + 4 S-adenosyl-L-homocysteine + 4 H(+). In terms of biological role, specifically dimethylates two adjacent adenosines (A1518 and A1519) in the loop of a conserved hairpin near the 3'-end of 16S rRNA in the 30S particle. May play a critical role in biogenesis of 30S subunits. The protein is Ribosomal RNA small subunit methyltransferase A of Maricaulis maris (strain MCS10) (Caulobacter maris).